The chain runs to 149 residues: 3-dehydroquinate dehydratase (149 aa).

Tyr-26 serves as the catalytic Proton acceptor. Substrate is bound by residues Asn-77, His-83, and Asp-90. Residue His-103 is the Proton donor of the active site. Substrate-binding positions include 104–105 (LS) and Arg-114.

It belongs to the type-II 3-dehydroquinase family. In terms of assembly, homododecamer.

It catalyses the reaction 3-dehydroquinate = 3-dehydroshikimate + H2O. It functions in the pathway metabolic intermediate biosynthesis; chorismate biosynthesis; chorismate from D-erythrose 4-phosphate and phosphoenolpyruvate: step 3/7. In terms of biological role, catalyzes a trans-dehydration via an enolate intermediate. The sequence is that of 3-dehydroquinate dehydratase (aroQ) from Haemophilus influenzae (strain ATCC 51907 / DSM 11121 / KW20 / Rd).